The following is an 833-amino-acid chain: Leucine--tRNA ligase (833 aa).

A 'HIGH' region motif is present at residues 41–52 (PYPSGAGLHVGH). Residues 610–614 (KMSKS) carry the 'KMSKS' region motif. Residue Lys-613 coordinates ATP.

It belongs to the class-I aminoacyl-tRNA synthetase family.

The protein resides in the cytoplasm. The catalysed reaction is tRNA(Leu) + L-leucine + ATP = L-leucyl-tRNA(Leu) + AMP + diphosphate. The polypeptide is Leucine--tRNA ligase (Streptococcus equi subsp. equi (strain 4047)).